Consider the following 63-residue polypeptide: Large ribosomal subunit protein bL35 (63 aa).

This sequence belongs to the bacterial ribosomal protein bL35 family.

The protein is Large ribosomal subunit protein bL35 of Sulfurimonas denitrificans (strain ATCC 33889 / DSM 1251) (Thiomicrospira denitrificans (strain ATCC 33889 / DSM 1251)).